The chain runs to 248 residues: Isoamyl acetate-hydrolyzing esterase 1 homolog (248 aa).

Residue Ser-24 is the Nucleophile of the active site. At Lys-63 the chain carries N6-succinyllysine. Asp-196 acts as the Proton donor in catalysis. The active-site Proton acceptor is the His-199.

This sequence belongs to the 'GDSL' lipolytic enzyme family. IAH1 subfamily.

Its function is as follows. Probable lipase. The protein is Isoamyl acetate-hydrolyzing esterase 1 homolog (IAH1) of Homo sapiens (Human).